Consider the following 480-residue polypeptide: Uridine 5'-monophosphate synthase (480 aa).

Position 2 is an N-acetylalanine (alanine 2). The OPRTase stretch occupies residues 2–214 (AAVGAALGPL…VFVAANHNGS (213 aa)). A Phosphotyrosine modification is found at tyrosine 37. Serine 214 carries the phosphoserine modification. A domain linker region spans residues 215–220 (PLSIKE). An OMPdecase region spans residues 221–480 (APKELSFSAR…WEAYLSRLGV (260 aa)). Residue serine 257 participates in orotidine 5'-phosphate binding. UMP contacts are provided by residues serine 257, aspartate 259, and 281–283 (KTH). Orotidine 5'-phosphate contacts are provided by residues lysine 281, lysine 314, aspartate 317, threonine 321, serine 372, 430-432 (QQY), and 450-451 (GR). Residues lysine 314 and aspartate 317 each act as for OMPdecase activity in the active site. Residues aspartate 317, threonine 321, serine 372, 430–432 (QQY), and 450–451 (GR) contribute to the UMP site.

This sequence in the N-terminal section; belongs to the purine/pyrimidine phosphoribosyltransferase family. It in the C-terminal section; belongs to the OMP decarboxylase family. As to quaternary structure, homodimer; dimerization is required for enzymatic activity.

The enzyme catalyses orotidine 5'-phosphate + diphosphate = orotate + 5-phospho-alpha-D-ribose 1-diphosphate. It carries out the reaction orotidine 5'-phosphate + H(+) = UMP + CO2. Its pathway is pyrimidine metabolism; UMP biosynthesis via de novo pathway; UMP from orotate: step 1/2. It functions in the pathway pyrimidine metabolism; UMP biosynthesis via de novo pathway; UMP from orotate: step 2/2. In terms of biological role, bifunctional enzyme catalyzing the last two steps of de novo pyrimidine biosynthesis, orotate phosphoribosyltransferase (OPRT), which converts orotate to orotidine-5'-monophosphate (OMP), and orotidine-5'-monophosphate decarboxylase (ODC), the terminal enzymatic reaction that decarboxylates OMP to uridine monophosphate (UMP). The polypeptide is Uridine 5'-monophosphate synthase (UMPS) (Pongo abelii (Sumatran orangutan)).